A 475-amino-acid chain; its full sequence is Ribulose bisphosphate carboxylase large chain (475 aa).

The propeptide occupies 1–2 (MS). Pro3 carries the post-translational modification N-acetylproline. Lys14 is subject to N6,N6,N6-trimethyllysine. The substrate site is built by Asn123 and Thr173. Residue Lys175 is the Proton acceptor of the active site. Substrate is bound at residue Lys177. Positions 201, 203, and 204 each coordinate Mg(2+). Residue Lys201 is modified to N6-carboxylysine. The Proton acceptor role is filled by His294. Arg295, His327, and Ser379 together coordinate substrate.

This sequence belongs to the RuBisCO large chain family. Type I subfamily. Heterohexadecamer of 8 large chains and 8 small chains; disulfide-linked. The disulfide link is formed within the large subunit homodimers. Mg(2+) serves as cofactor. In terms of processing, the disulfide bond which can form in the large chain dimeric partners within the hexadecamer appears to be associated with oxidative stress and protein turnover.

Its subcellular location is the plastid. The protein resides in the chloroplast. It catalyses the reaction 2 (2R)-3-phosphoglycerate + 2 H(+) = D-ribulose 1,5-bisphosphate + CO2 + H2O. It carries out the reaction D-ribulose 1,5-bisphosphate + O2 = 2-phosphoglycolate + (2R)-3-phosphoglycerate + 2 H(+). Its function is as follows. RuBisCO catalyzes two reactions: the carboxylation of D-ribulose 1,5-bisphosphate, the primary event in carbon dioxide fixation, as well as the oxidative fragmentation of the pentose substrate in the photorespiration process. Both reactions occur simultaneously and in competition at the same active site. This is Ribulose bisphosphate carboxylase large chain from Psilotum nudum (Whisk fern).